The sequence spans 132 residues: NADH-quinone oxidoreductase subunit I 1 (132 aa).

2 consecutive 4Fe-4S ferredoxin-type domains span residues 42 to 71 (LKVS…VEAG) and 81 to 110 (ERYE…MTGQ). [4Fe-4S] cluster contacts are provided by cysteine 51, cysteine 54, cysteine 57, cysteine 61, cysteine 90, cysteine 93, cysteine 96, and cysteine 100.

Belongs to the complex I 23 kDa subunit family. NDH-1 is composed of 14 different subunits. Subunits NuoA, H, J, K, L, M, N constitute the membrane sector of the complex. It depends on [4Fe-4S] cluster as a cofactor.

It is found in the cell inner membrane. The enzyme catalyses a quinone + NADH + 5 H(+)(in) = a quinol + NAD(+) + 4 H(+)(out). Functionally, NDH-1 shuttles electrons from NADH, via FMN and iron-sulfur (Fe-S) centers, to quinones in the respiratory chain. The immediate electron acceptor for the enzyme in this species is believed to be ubiquinone. Couples the redox reaction to proton translocation (for every two electrons transferred, four hydrogen ions are translocated across the cytoplasmic membrane), and thus conserves the redox energy in a proton gradient. This Geobacter sulfurreducens (strain ATCC 51573 / DSM 12127 / PCA) protein is NADH-quinone oxidoreductase subunit I 1.